Consider the following 345-residue polypeptide: S-adenosylmethionine:tRNA ribosyltransferase-isomerase (345 aa).

It belongs to the QueA family. As to quaternary structure, monomer.

Its subcellular location is the cytoplasm. It carries out the reaction 7-aminomethyl-7-carbaguanosine(34) in tRNA + S-adenosyl-L-methionine = epoxyqueuosine(34) in tRNA + adenine + L-methionine + 2 H(+). The protein operates within tRNA modification; tRNA-queuosine biosynthesis. Functionally, transfers and isomerizes the ribose moiety from AdoMet to the 7-aminomethyl group of 7-deazaguanine (preQ1-tRNA) to give epoxyqueuosine (oQ-tRNA). The protein is S-adenosylmethionine:tRNA ribosyltransferase-isomerase of Anaeromyxobacter sp. (strain Fw109-5).